A 346-amino-acid chain; its full sequence is Selenide, water dikinase (346 aa).

Residue U16 is part of the active site. U16 is a non-standard amino acid (selenocysteine). ATP-binding positions include K19 and T47–D49. D50 is a binding site for Mg(2+). ATP-binding positions include D67, D90, and G138–S140. Residue D90 coordinates Mg(2+). D226 is a binding site for Mg(2+).

This sequence belongs to the selenophosphate synthase 1 family. Class I subfamily. Homodimer. Mg(2+) serves as cofactor.

It catalyses the reaction hydrogenselenide + ATP + H2O = selenophosphate + AMP + phosphate + 2 H(+). Synthesizes selenophosphate from selenide and ATP. The polypeptide is Selenide, water dikinase (Haemophilus ducreyi (strain 35000HP / ATCC 700724)).